The chain runs to 403 residues: Phosphopentomutase (403 aa).

D13, D298, H303, D339, H340, and H351 together coordinate Mn(2+).

This sequence belongs to the phosphopentomutase family. It depends on Mn(2+) as a cofactor.

The protein resides in the cytoplasm. It catalyses the reaction 2-deoxy-alpha-D-ribose 1-phosphate = 2-deoxy-D-ribose 5-phosphate. It carries out the reaction alpha-D-ribose 1-phosphate = D-ribose 5-phosphate. The protein operates within carbohydrate degradation; 2-deoxy-D-ribose 1-phosphate degradation; D-glyceraldehyde 3-phosphate and acetaldehyde from 2-deoxy-alpha-D-ribose 1-phosphate: step 1/2. Its function is as follows. Isomerase that catalyzes the conversion of deoxy-ribose 1-phosphate (dRib-1-P) and ribose 1-phosphate (Rib-1-P) to deoxy-ribose 5-phosphate (dRib-5-P) and ribose 5-phosphate (Rib-5-P), respectively. The protein is Phosphopentomutase of Streptococcus thermophilus.